Consider the following 325-residue polypeptide: Quinolinate synthase (325 aa).

Iminosuccinate-binding residues include His41 and Ser58. Cys103 contributes to the [4Fe-4S] cluster binding site. Iminosuccinate contacts are provided by residues 129–131 and Ser146; that span reads YIN. [4Fe-4S] cluster is bound at residue Cys189. Iminosuccinate is bound by residues 215–217 and Thr232; that span reads HPE. Cys282 contributes to the [4Fe-4S] cluster binding site.

This sequence belongs to the quinolinate synthase family. Type 2 subfamily. The cofactor is [4Fe-4S] cluster.

It is found in the cytoplasm. It catalyses the reaction iminosuccinate + dihydroxyacetone phosphate = quinolinate + phosphate + 2 H2O + H(+). Its pathway is cofactor biosynthesis; NAD(+) biosynthesis; quinolinate from iminoaspartate: step 1/1. In terms of biological role, catalyzes the condensation of iminoaspartate with dihydroxyacetone phosphate to form quinolinate. The polypeptide is Quinolinate synthase (Rippkaea orientalis (strain PCC 8801 / RF-1) (Cyanothece sp. (strain PCC 8801))).